We begin with the raw amino-acid sequence, 253 residues long: Imidazole glycerol phosphate synthase subunit HisF (253 aa).

Active-site residues include Asp-11 and Asp-130.

This sequence belongs to the HisA/HisF family. In terms of assembly, heterodimer of HisH and HisF.

The protein resides in the cytoplasm. It catalyses the reaction 5-[(5-phospho-1-deoxy-D-ribulos-1-ylimino)methylamino]-1-(5-phospho-beta-D-ribosyl)imidazole-4-carboxamide + L-glutamine = D-erythro-1-(imidazol-4-yl)glycerol 3-phosphate + 5-amino-1-(5-phospho-beta-D-ribosyl)imidazole-4-carboxamide + L-glutamate + H(+). It participates in amino-acid biosynthesis; L-histidine biosynthesis; L-histidine from 5-phospho-alpha-D-ribose 1-diphosphate: step 5/9. In terms of biological role, IGPS catalyzes the conversion of PRFAR and glutamine to IGP, AICAR and glutamate. The HisF subunit catalyzes the cyclization activity that produces IGP and AICAR from PRFAR using the ammonia provided by the HisH subunit. This chain is Imidazole glycerol phosphate synthase subunit HisF, found in Dehalococcoides mccartyi (strain ATCC BAA-2100 / JCM 16839 / KCTC 5957 / BAV1).